The chain runs to 64 residues: Large ribosomal subunit protein bL35 (64 aa).

Belongs to the bacterial ribosomal protein bL35 family.

This is Large ribosomal subunit protein bL35 from Wolinella succinogenes (strain ATCC 29543 / DSM 1740 / CCUG 13145 / JCM 31913 / LMG 7466 / NCTC 11488 / FDC 602W) (Vibrio succinogenes).